Consider the following 184-residue polypeptide: PLASMODESMATA CALLOSE-BINDING PROTEIN 3 (184 aa).

The N-terminal stretch at 1 to 19 is a signal peptide; that stretch reads MAVFVLVMILLAMAGHSSG. Cysteine 22 and cysteine 84 form a disulfide bridge. A disordered region spans residues 109–146; that stretch reads SGSGTTTPVTTTPSTRVPTTTNTRPYTITPSTGGGLGI. Positions 113-139 are enriched in low complexity; the sequence is TTTPVTTTPSTRVPTTTNTRPYTITPS. The GPI-anchor amidated serine moiety is linked to residue serine 158. A propeptide spans 159–184 (removed in mature form); the sequence is FGFKLQSPRFGFIVLFTLFLPFYLFS.

Contains two additional disulfide bonds. Expressed in the shoot apical region and in young leaves but also detected in the laminar and vasculature of mature leaves.

The protein localises to the cell membrane. It is found in the cell junction. The protein resides in the plasmodesma. The polypeptide is PLASMODESMATA CALLOSE-BINDING PROTEIN 3 (PDCB3) (Arabidopsis thaliana (Mouse-ear cress)).